The primary structure comprises 957 residues: Histone-lysine N-methyltransferase, H3 lysine-9 specific SUVH3 (957 aa).

The 171-residue stretch at 73–243 (GHPPGVALGD…PQVCKFLMHG (171 aa)) folds into the YDG domain. A disordered region spans residues 182–209 (EAGGGEGGGGGEGGGGAKKGKGGKGGGK). The span at 183 to 198 (AGGGEGGGGGEGGGGA) shows a compositional bias: gly residues. Positions 319 to 441 (DVSGGQEAVP…HECGDGCSAK (123 aa)) constitute a Pre-SET domain. Residues 455–920 (LPLEVFMTES…QLEELSYNYG (466 aa)) form the SET domain. 3 disordered regions span residues 552 to 595 (DAAR…GGAE), 611 to 647 (AAGTAPGAGDNMDGVEGPAAQRSGGEEAAAGPGSSGA), and 783 to 805 (PPALPSTSDVGNGGTTGSGGGGG). Over residues 560–578 (QQPQQQQPQQQQQQPAAGG) the composition is skewed to low complexity. A compositionally biased stretch (gly residues) spans 793–805 (GNGGTTGSGGGGG). Positions 941–957 (FVMQCNCGAVGCIGNLM) constitute a Post-SET domain.

This sequence belongs to the class V-like SAM-binding methyltransferase superfamily. Histone-lysine methyltransferase family. Suvar3-9 subfamily.

It is found in the nucleus. Its subcellular location is the chromosome. It carries out the reaction L-lysyl(9)-[histone H3] + S-adenosyl-L-methionine = N(6)-methyl-L-lysyl(9)-[histone H3] + S-adenosyl-L-homocysteine + H(+). Histone methyltransferase. Monomethylates specifically 'Lys-9' of histone H3. H3 'Lys-9Me1' (H3K9me1) functions as an epigenetic mark of repressed chromatin. In Chlamydomonas reinhardtii (Chlamydomonas smithii), this protein is Histone-lysine N-methyltransferase, H3 lysine-9 specific SUVH3 (SUVH3).